A 119-amino-acid chain; its full sequence is Large ribosomal subunit protein bL20 (119 aa).

Belongs to the bacterial ribosomal protein bL20 family.

Its function is as follows. Binds directly to 23S ribosomal RNA and is necessary for the in vitro assembly process of the 50S ribosomal subunit. It is not involved in the protein synthesizing functions of that subunit. The chain is Large ribosomal subunit protein bL20 from Clostridium beijerinckii (strain ATCC 51743 / NCIMB 8052) (Clostridium acetobutylicum).